The following is a 287-amino-acid chain: tRNA-cytidine(32) 2-sulfurtransferase (287 aa).

Positions 58–63 (SGGKDS) match the PP-loop motif motif. [4Fe-4S] cluster contacts are provided by cysteine 133, cysteine 136, and cysteine 224.

The protein belongs to the TtcA family. Homodimer. Mg(2+) serves as cofactor. Requires [4Fe-4S] cluster as cofactor.

It localises to the cytoplasm. The catalysed reaction is cytidine(32) in tRNA + S-sulfanyl-L-cysteinyl-[cysteine desulfurase] + AH2 + ATP = 2-thiocytidine(32) in tRNA + L-cysteinyl-[cysteine desulfurase] + A + AMP + diphosphate + H(+). The protein operates within tRNA modification. Functionally, catalyzes the ATP-dependent 2-thiolation of cytidine in position 32 of tRNA, to form 2-thiocytidine (s(2)C32). The sulfur atoms are provided by the cysteine/cysteine desulfurase (IscS) system. The protein is tRNA-cytidine(32) 2-sulfurtransferase of Dinoroseobacter shibae (strain DSM 16493 / NCIMB 14021 / DFL 12).